A 32-amino-acid chain; its full sequence is DECFSPGTFCGFKPGLCCSARCFSLFCISLEF.

Intrachain disulfides connect C3–C18, C10–C22, and C17–C27. Residues P6 and P14 each carry the 4-hydroxyproline modification.

The protein belongs to the conotoxin O1 superfamily. Expressed by the venom duct.

The protein localises to the secreted. In terms of biological role, delta-conotoxins bind to site 6 of voltage-gated sodium channels (Nav) and inhibit the inactivation process. This toxin acts on Nav1.2/SCN2A, Nav1.3/SCN3A and Nav1.6/SCN8A (EC(50)=1.7 uM). In Conus consors (Singed cone), this protein is Delta-conotoxin-like CnVID.